Consider the following 447-residue polypeptide: Glutamyl-tRNA reductase (447 aa).

Residues 45–48 (TCNR), Ser-111, 116–118 (ETE), and Gln-122 each bind substrate. Cys-46 functions as the Nucleophile in the catalytic mechanism. 191 to 196 (GTGKYA) serves as a coordination point for NADP(+).

Belongs to the glutamyl-tRNA reductase family. In terms of assembly, homodimer.

The enzyme catalyses (S)-4-amino-5-oxopentanoate + tRNA(Glu) + NADP(+) = L-glutamyl-tRNA(Glu) + NADPH + H(+). The protein operates within porphyrin-containing compound metabolism; protoporphyrin-IX biosynthesis; 5-aminolevulinate from L-glutamyl-tRNA(Glu): step 1/2. Catalyzes the NADPH-dependent reduction of glutamyl-tRNA(Glu) to glutamate 1-semialdehyde (GSA). In Tropheryma whipplei (strain Twist) (Whipple's bacillus), this protein is Glutamyl-tRNA reductase.